Consider the following 194-residue polypeptide: NADH-quinone oxidoreductase subunit B 1 (194 aa).

The [4Fe-4S] cluster site is built by Cys73, Cys74, Cys138, and Cys168.

It belongs to the complex I 20 kDa subunit family. As to quaternary structure, NDH-1 is composed of 14 different subunits. Subunits NuoB, C, D, E, F, and G constitute the peripheral sector of the complex. [4Fe-4S] cluster is required as a cofactor.

It localises to the cell inner membrane. The catalysed reaction is a quinone + NADH + 5 H(+)(in) = a quinol + NAD(+) + 4 H(+)(out). Its function is as follows. NDH-1 shuttles electrons from NADH, via FMN and iron-sulfur (Fe-S) centers, to quinones in the respiratory chain. The immediate electron acceptor for the enzyme in this species is believed to be ubiquinone. Couples the redox reaction to proton translocation (for every two electrons transferred, four hydrogen ions are translocated across the cytoplasmic membrane), and thus conserves the redox energy in a proton gradient. This Rhizobium etli (strain CIAT 652) protein is NADH-quinone oxidoreductase subunit B 1.